Here is a 256-residue protein sequence, read N- to C-terminus: Alcohol dehydrogenase (256 aa).

The residue at position 2 (S2) is an N-acetylserine. NAD(+) is bound by residues 12–41 (FVAG…LDRI) and D65. Residue S140 coordinates substrate. Y153 (proton acceptor) is an active-site residue. NAD(+) is bound at residue K157.

It belongs to the short-chain dehydrogenases/reductases (SDR) family. Homodimer.

The catalysed reaction is a primary alcohol + NAD(+) = an aldehyde + NADH + H(+). It carries out the reaction a secondary alcohol + NAD(+) = a ketone + NADH + H(+). Its activity is regulated as follows. Inhibited by 2,2,2-trifluoroethanol and pyrazole. The polypeptide is Alcohol dehydrogenase (Adh) (Drosophila melanogaster (Fruit fly)).